Consider the following 526-residue polypeptide: tRNA modification GTPase MSS1, mitochondrial (526 aa).

The transit peptide at 1–19 directs the protein to the mitochondrion; the sequence is MNSASFLQSRLISRSFLVR. The 171-residue stretch at 274–444 folds into the TrmE-type G domain; it reads GIKLVLLGAP…LISTLTSNFE (171 aa). GTP is bound by residues 281–288, 328–332, and 394–397; these read GAPNVGKS, DTAGI, and NKSD.

The protein belongs to the TRAFAC class TrmE-Era-EngA-EngB-Septin-like GTPase superfamily. TrmE GTPase family. As to quaternary structure, forms a heterodimer with MTO1.

It is found in the mitochondrion. Functionally, GTPase involved in the 5-carboxymethylaminomethyl modification (mnm(5)s(2)U34) of the wobble uridine base in mitochondrial tRNAs. Involved in the expression of cytochrome c oxidase subunit 1 (COX1). Works in association with the small subunit of mitoribosomes. This is tRNA modification GTPase MSS1, mitochondrial (MSS1) from Saccharomyces cerevisiae (strain ATCC 204508 / S288c) (Baker's yeast).